The sequence spans 412 residues: Serine/threonine transporter SstT (412 aa).

Helical transmembrane passes span 16-36, 44-64, 82-102, 115-135, 141-161, 179-199, 217-237, 298-318, 330-350, and 357-377; these read LVAQIVVGLLAGALLALFLPG, LGDLFVQALKAVAPVLVFVLV, IIVLYALGTLSAAAVAVLASF, TDVIPPAGVGAVLNTLLFNIV, ALLNGNFIGILAWAIGLGFAF, VTLIVKVVIRFAPLGVFGLVA, LLVLVGAMLFMALVMNPLIVF, MGGAAITITVLTLAAVNTLGI, LLAAVCACGASGVAGGSLLLI, and FGISNDLAMQVVAVGFIIGVV.

Belongs to the dicarboxylate/amino acid:cation symporter (DAACS) (TC 2.A.23) family.

It is found in the cell inner membrane. The catalysed reaction is L-serine(in) + Na(+)(in) = L-serine(out) + Na(+)(out). It catalyses the reaction L-threonine(in) + Na(+)(in) = L-threonine(out) + Na(+)(out). Functionally, involved in the import of serine and threonine into the cell, with the concomitant import of sodium (symport system). The protein is Serine/threonine transporter SstT of Stutzerimonas stutzeri (strain A1501) (Pseudomonas stutzeri).